Reading from the N-terminus, the 579-residue chain is General transcription and DNA repair factor IIH subunit TFB1-3 (579 aa).

BSD domains lie at 107–161 and 186–238; these read LTPA…GKDS and RTNR…YLYS.

Belongs to the TFB1 family. In terms of assembly, component of the 7-subunit TFIIH core complex composed of XPB, XPD, TFB1/GTF2H1, GTF2H2/P44, TFB4/GTF2H3, TFB2/GTF2H4 and TFB5/GTF2H5, which is active in NER. The core complex associates with the 3-subunit CDK-activating kinase (CAK) module composed of CYCH1/cyclin H1, CDKD and MAT1/At4g30820 to form the 10-subunit holoenzyme (holo-TFIIH) active in transcription.

It is found in the nucleus. Component of the general transcription and DNA repair factor IIH (TFIIH) core complex, which is involved in general and transcription-coupled nucleotide excision repair (NER) of damaged DNA and, when complexed to CAK, in RNA transcription by RNA polymerase II. In NER, TFIIH acts by opening DNA around the lesion to allow the excision of the damaged oligonucleotide and its replacement by a new DNA fragment. In transcription, TFIIH has an essential role in transcription initiation. When the pre-initiation complex (PIC) has been established, TFIIH is required for promoter opening and promoter escape. Phosphorylation of the C-terminal tail (CTD) of the largest subunit of RNA polymerase II by the kinase module CAK controls the initiation of transcription. The protein is General transcription and DNA repair factor IIH subunit TFB1-3 of Arabidopsis thaliana (Mouse-ear cress).